Consider the following 339-residue polypeptide: Glycerol-3-phosphate dehydrogenase [NAD(P)+] (339 aa).

NADPH is bound by residues Ser-15, Tyr-16, His-36, and Lys-110. Sn-glycerol 3-phosphate-binding residues include Lys-110, Gly-139, and Thr-141. Position 143 (Ala-143) interacts with NADPH. Sn-glycerol 3-phosphate contacts are provided by Lys-195, Asp-248, Ser-258, Arg-259, and Asn-260. Lys-195 (proton acceptor) is an active-site residue. Arg-259 serves as a coordination point for NADPH. Residues Val-283 and Glu-285 each coordinate NADPH.

Belongs to the NAD-dependent glycerol-3-phosphate dehydrogenase family.

It localises to the cytoplasm. It catalyses the reaction sn-glycerol 3-phosphate + NAD(+) = dihydroxyacetone phosphate + NADH + H(+). The enzyme catalyses sn-glycerol 3-phosphate + NADP(+) = dihydroxyacetone phosphate + NADPH + H(+). The protein operates within membrane lipid metabolism; glycerophospholipid metabolism. In terms of biological role, catalyzes the reduction of the glycolytic intermediate dihydroxyacetone phosphate (DHAP) to sn-glycerol 3-phosphate (G3P), the key precursor for phospholipid synthesis. This chain is Glycerol-3-phosphate dehydrogenase [NAD(P)+], found in Klebsiella pneumoniae (strain 342).